We begin with the raw amino-acid sequence, 406 residues long: Nuclear hormone receptor family member nhr-133 (406 aa).

The nuclear receptor DNA-binding region spans 8–83 (SGPCEICEQP…VGMNSSKFQN (76 aa)). An NR C4-type zinc finger spans residues 11-31 (CEICEQPAHGNHFGVLSCRAC). An NR C4-type; degenerate zinc finger spans residues 47-66 (DRVCRKGNCIGNDLYRCKIC). The region spanning 150–406 (YSWSPNHYPN…YSHPEMFEFS (257 aa)) is the NR LBD domain.

The protein belongs to the nuclear hormone receptor family.

The protein resides in the nucleus. Its function is as follows. Orphan nuclear receptor. The chain is Nuclear hormone receptor family member nhr-133 from Caenorhabditis elegans.